Reading from the N-terminus, the 207-residue chain is GTP-binding protein RHO1 (207 aa).

Residue 18-25 (GDGACGKT) coordinates GTP. Positions 40 to 48 (YVPTVFDNY) match the Effector region motif. Residues 65–69 (DTAGQ) and 123–126 (CKAD) each bind GTP. Residues 187 to 207 (GKQGKSKAKSDKKKKKKCVVL) form a disordered region. Basic residues predominate over residues 190-207 (GKSKAKSDKKKKKKCVVL). The residue at position 204 (Cys-204) is a Cysteine methyl ester. Cys-204 carries the S-geranylgeranyl cysteine lipid modification. A propeptide spans 205-207 (VVL) (removed in mature form).

This sequence belongs to the small GTPase superfamily. Rho family.

It localises to the cell membrane. In terms of biological role, involved in the regulation of actin polarization. Rho proteins are required for distinct steps during polarized hyphal growth of A.gossypii. The chain is GTP-binding protein RHO1 (RHO1) from Eremothecium gossypii (strain ATCC 10895 / CBS 109.51 / FGSC 9923 / NRRL Y-1056) (Yeast).